The following is an 82-amino-acid chain: Delta-actitoxin-Aeq2c (82 aa).

The signal sequence occupies residues 1–19; the sequence is MNRLMILVFAAVFLALASA. Residues 20–26 constitute a propeptide that is removed on maturation; it reads DEDVDIA. 3 cysteine pairs are disulfide-bonded: Cys32–Cys79, Cys34–Cys69, and Cys62–Cys80.

Belongs to the sea anemone sodium channel inhibitory toxin family. Type I subfamily.

The protein localises to the secreted. Its subcellular location is the nematocyst. Its function is as follows. Binds specifically to voltage-gated sodium channels (Nav), thereby delaying their inactivation during signal transduction. Causes death to crabs. The polypeptide is Delta-actitoxin-Aeq2c (Actinia equina (Beadlet anemone)).